The primary structure comprises 277 residues: Formamidopyrimidine-DNA glycosylase (277 aa).

The Schiff-base intermediate with DNA role is filled by Pro2. Glu3 functions as the Proton donor in the catalytic mechanism. The active-site Proton donor; for beta-elimination activity is Lys58. His97, Arg116, and Arg158 together coordinate DNA. Residues 243–277 (NVYGRAGAPCPRCGRSIRQRRIAQRSTWYCPGCQR) form an FPG-type zinc finger. The active-site Proton donor; for delta-elimination activity is the Arg267.

Belongs to the FPG family. Monomer. The cofactor is Zn(2+).

It carries out the reaction Hydrolysis of DNA containing ring-opened 7-methylguanine residues, releasing 2,6-diamino-4-hydroxy-5-(N-methyl)formamidopyrimidine.. It catalyses the reaction 2'-deoxyribonucleotide-(2'-deoxyribose 5'-phosphate)-2'-deoxyribonucleotide-DNA = a 3'-end 2'-deoxyribonucleotide-(2,3-dehydro-2,3-deoxyribose 5'-phosphate)-DNA + a 5'-end 5'-phospho-2'-deoxyribonucleoside-DNA + H(+). Functionally, involved in base excision repair of DNA damaged by oxidation or by mutagenic agents. Acts as a DNA glycosylase that recognizes and removes damaged bases. Has a preference for oxidized purines, such as 7,8-dihydro-8-oxoguanine (8-oxoG). Has AP (apurinic/apyrimidinic) lyase activity and introduces nicks in the DNA strand. Cleaves the DNA backbone by beta-delta elimination to generate a single-strand break at the site of the removed base with both 3'- and 5'-phosphates. This is Formamidopyrimidine-DNA glycosylase from Alkalilimnicola ehrlichii (strain ATCC BAA-1101 / DSM 17681 / MLHE-1).